A 242-amino-acid chain; its full sequence is Uridylate kinase (242 aa).

Lys12–Gly15 lines the ATP pocket. The segment at Gly20–Gly25 is involved in allosteric activation by GTP. Gly54 lines the UMP pocket. Gly55 and Arg59 together coordinate ATP. UMP is bound by residues Asp74 and Thr135–Thr142. ATP is bound by residues Gln163, Tyr168, and Asp171.

This sequence belongs to the UMP kinase family. In terms of assembly, homohexamer.

The protein resides in the cytoplasm. It carries out the reaction UMP + ATP = UDP + ADP. It participates in pyrimidine metabolism; CTP biosynthesis via de novo pathway; UDP from UMP (UMPK route): step 1/1. Allosterically activated by GTP. Inhibited by UTP. Catalyzes the reversible phosphorylation of UMP to UDP. This chain is Uridylate kinase, found in Desulforamulus reducens (strain ATCC BAA-1160 / DSM 100696 / MI-1) (Desulfotomaculum reducens).